We begin with the raw amino-acid sequence, 259 residues long: MGNQQVVSITGAGSGIGLELVRSFKSAGYYVSALVRNEEQEALLCKEFKDALEIVVGDVRDHATNEKLIKQTIDRFGHLDCFIANAGIWDYMLSIEEPWEKISSSFDEIFDINVKSYFSGISAALPELKKTNGSVVMTASVSSHAVGGGGSCYIASKHAVLGMVKALAYELAPEVRVNAVSPGGTVTSLCGSASAGFDKMHMKDMPGIDDMIKGLTPLGFAAKPEDVVAPYLLLASRKQGKFITGTVISIDGGMALGRK.

NAD(+) is bound at residue 8–32; it reads SITGAGSGIGLELVRSFKSAGYYVS. A substrate-binding site is contributed by Ser140. Residue Tyr153 is the Proton acceptor of the active site.

The protein belongs to the short-chain dehydrogenases/reductases (SDR) family.

The catalysed reaction is (1R,2S)-1,2-dihydronaphthalene-1,2-diol + NAD(+) = naphthalene-1,2-diol + NADH + H(+). The enzyme catalyses cis-1,2-dihydroxy-1,2-dihydrodibenzothiophene + NAD(+) = 1,2-dihydroxydibenzothiophene + NADH + H(+). It participates in aromatic compound metabolism; naphthalene degradation. Its function is as follows. Catalyzes the oxidation of naphthalene dihydrodiol into 1,2-dihydroxynaphthalene. The polypeptide is 1,2-dihydroxy-1,2-dihydronaphthalene dehydrogenase (nahB) (Pseudomonas putida (Arthrobacter siderocapsulatus)).